We begin with the raw amino-acid sequence, 432 residues long: Serine--tRNA ligase (432 aa).

L-serine is bound at residue 230-232 (TAE). 261 to 263 (RSE) contributes to the ATP binding site. E284 contacts L-serine. Position 348-351 (348-351 (EVSS)) interacts with ATP. S383 contributes to the L-serine binding site.

The protein belongs to the class-II aminoacyl-tRNA synthetase family. Type-1 seryl-tRNA synthetase subfamily. Homodimer. The tRNA molecule binds across the dimer.

Its subcellular location is the cytoplasm. The catalysed reaction is tRNA(Ser) + L-serine + ATP = L-seryl-tRNA(Ser) + AMP + diphosphate + H(+). It carries out the reaction tRNA(Sec) + L-serine + ATP = L-seryl-tRNA(Sec) + AMP + diphosphate + H(+). Its pathway is aminoacyl-tRNA biosynthesis; selenocysteinyl-tRNA(Sec) biosynthesis; L-seryl-tRNA(Sec) from L-serine and tRNA(Sec): step 1/1. Its function is as follows. Catalyzes the attachment of serine to tRNA(Ser). Is also able to aminoacylate tRNA(Sec) with serine, to form the misacylated tRNA L-seryl-tRNA(Sec), which will be further converted into selenocysteinyl-tRNA(Sec). This Limosilactobacillus fermentum (strain NBRC 3956 / LMG 18251) (Lactobacillus fermentum) protein is Serine--tRNA ligase.